The primary structure comprises 93 residues: UPF0213 protein CPE1444 (93 aa).

One can recognise a GIY-YIG domain in the interval 1–75; the sequence is MNYVYILKCK…KKLTRNQKLQ (75 aa).

It belongs to the UPF0213 family.

The protein is UPF0213 protein CPE1444 of Clostridium perfringens (strain 13 / Type A).